The following is a 337-amino-acid chain: Equatorin (337 aa).

An N-terminal signal peptide occupies residues 1–20 (MDFILLIILSGVFLPDIISL). Topologically, residues 21 to 183 (QPIVGQEPGV…LSELEEIKLK (163 aa)) are lumenal. The interval 110-130 (SKPTASGEEEKPSESSRKTST) is disordered. The span at 117–126 (EEEKPSESSR) shows a compositional bias: basic and acidic residues. Asn145 carries an N-linked (GlcNAc...) asparagine glycan. The chain crosses the membrane as a helical span at residues 184-204 (LMLGISLMTLVLLIPLLIFCF). The Cytoplasmic segment spans residues 205-337 (ATLYKLRHLR…LLNKEGSPSN (133 aa)). Positions 259-283 (SSEMRRSRTRRSKSKPMDFSAGSNQ) are disordered. Ser336 is modified (phosphoserine).

In terms of assembly, interacts with SNAP25. In terms of processing, highly N- and O-glycosylated; contains sialic acid. MN9 epitope is O-glycosylated. Sperm specific, including germ cells (at protein level).

It is found in the cytoplasmic vesicle. Its subcellular location is the secretory vesicle. It localises to the acrosome membrane. The protein localises to the acrosome inner membrane. The protein resides in the acrosome outer membrane. It is found in the nucleus. Its subcellular location is the cytoplasm. Functionally, acrosomal membrane-anchored protein involved in the process of fertilization and in acrosome biogenesis. The sequence is that of Equatorin (Eqtn) from Mus musculus (Mouse).